The sequence spans 417 residues: GTP-binding protein YPT11 (417 aa).

The segment at 1–34 (MSQRKRYSLNVVTSPSIPSPTPSAPIRTNESNWE) is disordered. GTP is bound by residues 97 to 104 (GDANVGKT), 228 to 232 (DTAGQ), and 292 to 295 (NKID). 2 S-geranylgeranyl cysteine lipidation sites follow: Cys-415 and Cys-416.

This sequence belongs to the small GTPase superfamily. Rab family. Interacts with MYO2 (via C-terminal tail domain). Interacts with YIF1, YIP3, YIP4 and YIP5.

The protein resides in the endoplasmic reticulum membrane. It is found in the bud tip. Its subcellular location is the bud neck. Involved in the positive control of both endoplasmic reticulum (ER) and mitochondrion inheritance during cell divison. Required for the MYO2-dependent retention of newly inherited mitochondria at the bud tip in developing daughter cells. The polypeptide is GTP-binding protein YPT11 (YPT11) (Saccharomyces cerevisiae (strain RM11-1a) (Baker's yeast)).